Reading from the N-terminus, the 192-residue chain is Fe/S biogenesis protein NfuA (192 aa).

2 residues coordinate [4Fe-4S] cluster: Cys149 and Cys152.

This sequence belongs to the NfuA family. As to quaternary structure, homodimer. The cofactor is [4Fe-4S] cluster.

Functionally, involved in iron-sulfur cluster biogenesis. Binds a 4Fe-4S cluster, can transfer this cluster to apoproteins, and thereby intervenes in the maturation of Fe/S proteins. Could also act as a scaffold/chaperone for damaged Fe/S proteins. This chain is Fe/S biogenesis protein NfuA, found in Shewanella sp. (strain ANA-3).